The primary structure comprises 201 residues: Large ribosomal subunit protein bL25 (201 aa).

Belongs to the bacterial ribosomal protein bL25 family. CTC subfamily. In terms of assembly, part of the 50S ribosomal subunit; part of the 5S rRNA/L5/L18/L25 subcomplex. Contacts the 5S rRNA. Binds to the 5S rRNA independently of L5 and L18.

Functionally, this is one of the proteins that binds to the 5S RNA in the ribosome where it forms part of the central protuberance. The chain is Large ribosomal subunit protein bL25 from Ectopseudomonas mendocina (strain ymp) (Pseudomonas mendocina).